We begin with the raw amino-acid sequence, 176 residues long: Outer membrane protein assembly factor BamE (176 aa).

Positions 1 to 21 (MQNAKLMLTCLAFAGLAALAG) are cleaved as a signal peptide. Cys22 is lipidated: N-palmitoyl cysteine. A lipid anchor (S-diacylglycerol cysteine) is attached at Cys22. Positions 121–176 (KEGSTTVTQPADQQKPEAQKEEPPKPGSTLEQLQREVDEAQPVPVPTPEPLDPSPQ) are disordered. Residues 123–132 (GSTTVTQPAD) are compositionally biased toward polar residues. A compositionally biased stretch (basic and acidic residues) spans 134–144 (QKPEAQKEEPP). Residues 163–176 (VPVPTPEPLDPSPQ) show a composition bias toward pro residues.

It belongs to the BamE family. As to quaternary structure, part of the Bam complex.

The protein resides in the cell outer membrane. In terms of biological role, part of the outer membrane protein assembly complex, which is involved in assembly and insertion of beta-barrel proteins into the outer membrane. May have a structural role in maintaining the cell envelope integrity. The chain is Outer membrane protein assembly factor BamE from Pseudomonas aeruginosa (strain ATCC 15692 / DSM 22644 / CIP 104116 / JCM 14847 / LMG 12228 / 1C / PRS 101 / PAO1).